The following is a 323-amino-acid chain: Transcription factor LUX (323 aa).

3 disordered regions span residues 1–25 (MGEE…WEMG), 53–139 (ERSR…DLSG), and 267–298 (GYHH…ESNP). The span at 65–87 (SETTLSSLRGGSSGPNTSSSNNN) shows a compositional bias: low complexity. Residues 139–200 (GKTLKRPRLV…HLQKYRLYLK (62 aa)) constitute a DNA-binding region (myb-like GARP).

As to quaternary structure, interacts with ELF3 and forms a complex with ELF3 and ELF4.

Its subcellular location is the nucleus. Its function is as follows. Transcription factor that is essential for the generation of the circadian clock oscillation. Is necessary for activation of CCA1 and LHY expression. Is coregulated with TOC1 and seems to be repressed by CCA1 and LHY by direct binding of these proteins to the evening element in the LUX promoter. Directly regulates the expression of PRR9, a major component of the morning transcriptional feedback circuit, by binding specific sites on PRR9 promoter. Binds to its own promoter, inducing a negative auto-regulatory feedback loop within the core clock. Binds to ELF3 and associates with ELF4 in a diurnal complex which is required for the expression of the growth-promoting transcription factors PIF4 and PIF5 and subsequent hypocotyl growth in the early evening. The chain is Transcription factor LUX (LUX) from Arabidopsis thaliana (Mouse-ear cress).